The primary structure comprises 406 residues: Putative permease Rv2963 (406 aa).

9 helical membrane passes run Trp-30–Val-50, Leu-67–Leu-87, Leu-111–Glu-131, Phe-132–Ala-152, Leu-208–Val-228, Ala-246–Gly-266, Gly-278–Leu-298, Val-312–Phe-332, and Val-361–Pro-381.

This sequence belongs to the UPF0718 family.

The protein resides in the cell membrane. This is Putative permease Rv2963 from Mycobacterium tuberculosis (strain ATCC 25618 / H37Rv).